Consider the following 100-residue polypeptide: Large ribosomal subunit protein bL21 (100 aa).

Belongs to the bacterial ribosomal protein bL21 family. As to quaternary structure, part of the 50S ribosomal subunit. Contacts protein L20.

This protein binds to 23S rRNA in the presence of protein L20. The polypeptide is Large ribosomal subunit protein bL21 (Paramagnetospirillum magneticum (strain ATCC 700264 / AMB-1) (Magnetospirillum magneticum)).